The following is a 112-amino-acid chain: UPF0375 protein R05A10.4 (112 aa).

A signal peptide spans 1 to 19 (MNLSIFSAIIFSITIASSA). Asn-59 carries an N-linked (GlcNAc...) asparagine glycan.

It belongs to the UPF0375 family.

The protein localises to the secreted. This is UPF0375 protein R05A10.4 from Caenorhabditis elegans.